A 321-amino-acid chain; its full sequence is Acetylglutamate kinase (321 aa).

Residues G88–G89, R110, and N216 contribute to the substrate site.

The protein belongs to the acetylglutamate kinase family. ArgB subfamily.

It is found in the cytoplasm. The catalysed reaction is N-acetyl-L-glutamate + ATP = N-acetyl-L-glutamyl 5-phosphate + ADP. The protein operates within amino-acid biosynthesis; L-arginine biosynthesis; N(2)-acetyl-L-ornithine from L-glutamate: step 2/4. Its function is as follows. Catalyzes the ATP-dependent phosphorylation of N-acetyl-L-glutamate. This chain is Acetylglutamate kinase, found in Ehrlichia chaffeensis (strain ATCC CRL-10679 / Arkansas).